The sequence spans 241 residues: Ion-translocating oxidoreductase complex subunit E (241 aa).

6 helical membrane-spanning segments follow: residues 22–42 (LLGL…IGLG), 69–89 (IPIY…VIKA), 91–111 (AFNL…NCIV), 124–144 (VLVS…TMFL), 157–177 (LFFG…IEVL), and 182–202 (VFLL…VLAG).

The protein belongs to the NqrDE/RnfAE family. As to quaternary structure, the complex is composed of six subunits: RnfA, RnfB, RnfC, RnfD, RnfE and RnfG.

It is found in the cell inner membrane. Its function is as follows. Part of a membrane-bound complex that couples electron transfer with translocation of ions across the membrane. This is Ion-translocating oxidoreductase complex subunit E from Buchnera aphidicola subsp. Baizongia pistaciae (strain Bp).